The sequence spans 264 residues: Hydroxyethylthiazole kinase (264 aa).

Met-43 lines the substrate pocket. The ATP site is built by Arg-119 and Thr-165. Residue Gly-192 coordinates substrate.

The protein belongs to the Thz kinase family. Requires Mg(2+) as cofactor.

It catalyses the reaction 5-(2-hydroxyethyl)-4-methylthiazole + ATP = 4-methyl-5-(2-phosphooxyethyl)-thiazole + ADP + H(+). It participates in cofactor biosynthesis; thiamine diphosphate biosynthesis; 4-methyl-5-(2-phosphoethyl)-thiazole from 5-(2-hydroxyethyl)-4-methylthiazole: step 1/1. Functionally, catalyzes the phosphorylation of the hydroxyl group of 4-methyl-5-beta-hydroxyethylthiazole (THZ). This chain is Hydroxyethylthiazole kinase, found in Anoxybacillus flavithermus (strain DSM 21510 / WK1).